Reading from the N-terminus, the 125-residue chain is MAKPSYVKFDVPPELAEKALEALKKAKETGKIRKGTNEATKAIERGQAKLVLIAEDVQPEEIVAHLPPLCEEKKIPYIYVPTKKGIGEACGLQVGAAAAAILDPGQGKDVLDEVIKRVSELTGKS.

It belongs to the eukaryotic ribosomal protein eL8 family. As to quaternary structure, part of the 50S ribosomal subunit. Probably part of the RNase P complex.

The protein resides in the cytoplasm. Functionally, multifunctional RNA-binding protein that recognizes the K-turn motif in ribosomal RNA, the RNA component of RNase P, box H/ACA, box C/D and box C'/D' sRNAs. This is Large ribosomal subunit protein eL8 from Metallosphaera sedula (strain ATCC 51363 / DSM 5348 / JCM 9185 / NBRC 15509 / TH2).